The sequence spans 693 residues: Cyclin-dependent kinase G-1 (693 aa).

The span at 1-10 shows a compositional bias: gly residues; the sequence is MAAGSHGGYR. 2 disordered regions span residues 1 to 148 and 236 to 308; these read MAAG…ARDP and KKKK…DDYP. Positions 13 to 24 are enriched in basic and acidic residues; sequence EVAREREHDVGV. The segment covering 26–39 has biased composition (basic residues); the sequence is RRSKEHYHHRHPSR. 3 stretches are compositionally biased toward basic and acidic residues: residues 40–54, 75–87, and 97–122; these read HRDS…RSGG, RPSE…REPG, and RSGE…EEAK. A compositionally biased stretch (low complexity) spans 268-284; sequence SVRSSSRSSDSGVLQGS. Residues 287–304 show a composition bias toward basic and acidic residues; sequence RDLEVEKGDNIDVEKAAD. The 292-residue stretch at 349–640 folds into the Protein kinase domain; that stretch reads FERLNTINEG…AEDALNHEWF (292 aa). Residues 355–363 and Lys378 contribute to the ATP site; that span reads INEGTYGVV. The residue at position 359 (Thr359) is a Phosphothreonine. Tyr360 bears the Phosphotyrosine mark. Asp473 acts as the Proton acceptor in catalysis. Ser500 is modified (phosphoserine). At Thr506 the chain carries Phosphothreonine. The disordered stretch occupies residues 664–693; the sequence is RFKKHMKSPDPLEEQWMKEQGNNGDRGLFG.

The protein belongs to the protein kinase superfamily. CMGC Ser/Thr protein kinase family. CDC2/CDKX subfamily.

It carries out the reaction L-seryl-[protein] + ATP = O-phospho-L-seryl-[protein] + ADP + H(+). The catalysed reaction is L-threonyl-[protein] + ATP = O-phospho-L-threonyl-[protein] + ADP + H(+). The enzyme catalyses [DNA-directed RNA polymerase] + ATP = phospho-[DNA-directed RNA polymerase] + ADP + H(+). The protein is Cyclin-dependent kinase G-1 (CDKG-1) of Oryza sativa subsp. indica (Rice).